A 328-amino-acid chain; its full sequence is Malate dehydrogenase 1 (328 aa).

Position 12–18 (12–18 (GAAGQIG)) interacts with NAD(+). Residues R95 and R101 each coordinate substrate. NAD(+)-binding positions include N108, Q115, and 132 to 134 (VGN). 2 residues coordinate substrate: N134 and R165. H190 functions as the Proton acceptor in the catalytic mechanism.

Belongs to the LDH/MDH superfamily. MDH type 2 family.

The enzyme catalyses (S)-malate + NAD(+) = oxaloacetate + NADH + H(+). Functionally, catalyzes the reversible oxidation of malate to oxaloacetate. This Albidiferax ferrireducens (strain ATCC BAA-621 / DSM 15236 / T118) (Rhodoferax ferrireducens) protein is Malate dehydrogenase 1.